Here is a 429-residue protein sequence, read N- to C-terminus: Saccharopine dehydrogenase-like oxidoreductase (429 aa).

Position 2 is an N-acetylalanine (Ala2). At Ser217 the chain carries Phosphoserine.

Belongs to the saccharopine dehydrogenase family.

This is Saccharopine dehydrogenase-like oxidoreductase (SCCPDH) from Pongo abelii (Sumatran orangutan).